A 356-amino-acid polypeptide reads, in one-letter code: N-acyl-phosphatidylethanolamine-hydrolyzing phospholipase D 1 (356 aa).

2 residues coordinate Zn(2+): H144 and H146. Y147 is a binding site for an N-acyl-1,2-diacyl-sn-glycero-3-phosphoethanolamine. D148, H149, H217, and D248 together coordinate Zn(2+). H286 contributes to the an N-acyl-1,2-diacyl-sn-glycero-3-phosphoethanolamine binding site. Residue H308 participates in Zn(2+) binding.

This sequence belongs to the NAPE-PLD family. Zn(2+) serves as cofactor. In terms of tissue distribution, expressed in interneurons that are in close proximity to the primary sensory neurons. Predominantly expressed in the pharynx but can also be found in cell bodies of the dorsal and ventral nerve cords.

The catalysed reaction is an N-acyl-1,2-diacyl-sn-glycero-3-phosphoethanolamine + H2O = an N-acylethanolamine + a 1,2-diacyl-sn-glycero-3-phosphate + H(+). The enzyme catalyses 1,2-dihexadecanoyl-sn-glycero-3-phospho-(N-hexadecanoyl)-ethanolamine + H2O = 1,2-dihexadecanoyl-sn-glycero-3-phosphate + N-hexadecanoylethanolamine + H(+). It catalyses the reaction N-(5Z,8Z,11Z,14Z-eicosatetraenoyl)-1,2-di-(9Z-octadecenoyl)-sn-glycero-3-phosphoethanolamine + H2O = N-(5Z,8Z,11Z,14Z-eicosatetraenoyl)-ethanolamine + 1,2-di-(9Z-octadecenoyl)-sn-glycero-3-phosphate + H(+). In terms of biological role, D-type phospholipase that hydrolyzes N-acyl-phosphatidylethanolamines (NAPEs) to produce bioactive N-acylethanolamines/fatty acid ethanolamides (NAEs/FAEs) and phosphatidic acid. NAEs are bioactive lipids that are involved in diverse physiological processes such as growth and lifespan. This is N-acyl-phosphatidylethanolamine-hydrolyzing phospholipase D 1 from Caenorhabditis elegans.